A 384-amino-acid chain; its full sequence is Aryl-alcohol dehydrogenase GME11368 (384 aa).

Residue Asp-69 coordinates NADP(+). Catalysis depends on Tyr-74, which acts as the Proton donor. NADP(+) contacts are provided by residues 177–178 (SD), Gln-203, and 301–309 (RKPEHLKAN).

Belongs to the aldo/keto reductase family. Aldo/keto reductase 2 subfamily.

Its pathway is secondary metabolite biosynthesis. Functionally, aryl-alcohol dehydrogenase; part of the gene cluster that mediates the biosynthesis of dibenzodioxocinones such as pestalotiollide B, a novel class of inhibitors against cholesterol ester transfer protein (CEPT). The biosynthesis initiates from condensation of acetate and malonate units catalyzed by the non-reducing PKS pks8/GME11356. Pks8/GME11356 lacks a thioesterase (TE) domain, which is important to the cyclizing of the third ring of atrochrysone carboxylic acid, and the esterase GME11355 might play the role of TE and catalyzes the cyclization reaction of the C ring. The lactamase-like protein GME11357 (or other beta-lactamases in Pestalotiopsis microspora) probably hydrolyzes the thioester bond between the ACP of pks8/GME11356 and the intermediate to release atrochrysone carboxylic acid, which is spontaneously dehydrates to form endocrocin anthrone. Endocrocin anthrone is further converted to emodin via the endocrocin intermediate. Emodin is then oxidized by several enzymes such as the Baeyer-Villiger oxidase GME11358, the oxidoreductase GME11367, the short chain dehydrogenase/reductase GME11373, as well as by other oxidoreductases from the cluster, to modify the A and C rings and open the B ring, and finally yield monodictyphenone. The prenyltransferase GME11375 may catalyze the addition reaction between the C5 side chains and the carbon bone of dibenzodioxocinones. The remaining biochemical reactions to the final product dibenzodioxocinones should be methylation catalyzed by methyltransferase GME11366 and reduction and lactonization reaction catalyzed by a series of oxidordeuctases. The chain is Aryl-alcohol dehydrogenase GME11368 from Pestalotiopsis microspora.